Consider the following 376-residue polypeptide: Ribosomal RNA large subunit methyltransferase G (376 aa).

The protein belongs to the methyltransferase superfamily. RlmG family.

It localises to the cytoplasm. The catalysed reaction is guanosine(1835) in 23S rRNA + S-adenosyl-L-methionine = N(2)-methylguanosine(1835) in 23S rRNA + S-adenosyl-L-homocysteine + H(+). Specifically methylates the guanine in position 1835 (m2G1835) of 23S rRNA. The protein is Ribosomal RNA large subunit methyltransferase G of Cronobacter sakazakii (strain ATCC BAA-894) (Enterobacter sakazakii).